The primary structure comprises 395 residues: Endophilin-B2 (395 aa).

Position 1 is an N-acetylmethionine (methionine 1). The segment at 1-27 (MDFNMKKLASDAGIFFTRAVQFTEEKF) is membrane-binding amphipathic helix. Serine 10 is modified (phosphoserine). The BAR domain occupies 24–287 (EEKFGQAEKT…LGRFPGTFVG (264 aa)). Coiled coils occupy residues 116–132 (IKVA…ERDF) and 206–240 (ASAL…LLLE). Positions 335-395 (SGTRKARVLY…VPVTYLELLS (61 aa)) constitute an SH3 domain. Serine 395 carries the post-translational modification Phosphoserine.

It belongs to the endophilin family. In terms of assembly, homodimer, and heterodimer with SH3GLB1. As to expression, detected in skeletal muscle, adipocyte, brain, lung, colon and mammary gland.

Its subcellular location is the cytoplasm. The polypeptide is Endophilin-B2 (SH3GLB2) (Homo sapiens (Human)).